The primary structure comprises 242 residues: N-glycosylase/DNA lyase (242 aa).

Residues glutamine 26, serine 53, and tryptophan 64 each contribute to the 8-oxoguanine site. The tract at residues 120-184 is helix-hairpin-helix; that stretch reads EGYYKNMKML…EDLRIKSVTS (65 aa). The active-site Schiff-base intermediate with DNA is lysine 144. Phenylalanine 148 and proline 174 together coordinate 8-oxoguanine. Aspartate 176 is a catalytic residue. 8-oxoguanine contacts are provided by aspartate 210 and tryptophan 214.

The protein belongs to the archaeal N-glycosylase/DNA lyase (AGOG) family.

The catalysed reaction is 2'-deoxyribonucleotide-(2'-deoxyribose 5'-phosphate)-2'-deoxyribonucleotide-DNA = a 3'-end 2'-deoxyribonucleotide-(2,3-dehydro-2,3-deoxyribose 5'-phosphate)-DNA + a 5'-end 5'-phospho-2'-deoxyribonucleoside-DNA + H(+). Functionally, DNA repair enzyme that is part of the base excision repair (BER) pathway; protects from oxidative damage by removing the major product of DNA oxidation, 8-oxoguanine (GO), from single- and double-stranded DNA substrates. This Pyrococcus furiosus (strain ATCC 43587 / DSM 3638 / JCM 8422 / Vc1) protein is N-glycosylase/DNA lyase.